The chain runs to 156 residues: 6,7-dimethyl-8-ribityllumazine synthase (156 aa).

Residues F22, A57 to E59, and T81 to I83 each bind 5-amino-6-(D-ribitylamino)uracil. Residue G86–T87 coordinates (2S)-2-hydroxy-3-oxobutyl phosphate. Residue H89 is the Proton donor of the active site. F114 serves as a coordination point for 5-amino-6-(D-ribitylamino)uracil. Position 128 (R128) interacts with (2S)-2-hydroxy-3-oxobutyl phosphate.

This sequence belongs to the DMRL synthase family. Forms an icosahedral capsid composed of 60 subunits, arranged as a dodecamer of pentamers.

The enzyme catalyses (2S)-2-hydroxy-3-oxobutyl phosphate + 5-amino-6-(D-ribitylamino)uracil = 6,7-dimethyl-8-(1-D-ribityl)lumazine + phosphate + 2 H2O + H(+). It participates in cofactor biosynthesis; riboflavin biosynthesis; riboflavin from 2-hydroxy-3-oxobutyl phosphate and 5-amino-6-(D-ribitylamino)uracil: step 1/2. In terms of biological role, catalyzes the formation of 6,7-dimethyl-8-ribityllumazine by condensation of 5-amino-6-(D-ribitylamino)uracil with 3,4-dihydroxy-2-butanone 4-phosphate. This is the penultimate step in the biosynthesis of riboflavin. The protein is 6,7-dimethyl-8-ribityllumazine synthase of Yersinia enterocolitica serotype O:8 / biotype 1B (strain NCTC 13174 / 8081).